A 304-amino-acid polypeptide reads, in one-letter code: Acetylglutamate kinase (304 aa).

Substrate contacts are provided by residues 70–71 (GG), R92, and N196.

The protein belongs to the acetylglutamate kinase family. ArgB subfamily.

It localises to the cytoplasm. The enzyme catalyses N-acetyl-L-glutamate + ATP = N-acetyl-L-glutamyl 5-phosphate + ADP. It functions in the pathway amino-acid biosynthesis; L-arginine biosynthesis; N(2)-acetyl-L-ornithine from L-glutamate: step 2/4. Functionally, catalyzes the ATP-dependent phosphorylation of N-acetyl-L-glutamate. The chain is Acetylglutamate kinase from Methanococcoides burtonii (strain DSM 6242 / NBRC 107633 / OCM 468 / ACE-M).